Here is a 127-residue protein sequence, read N- to C-terminus: Large-conductance mechanosensitive channel (127 aa).

A run of 3 helical transmembrane segments spans residues 19-39, 42-62, and 67-87; these read VGVI…TNII, LLGI…VGSA, and GAFI…FLLI.

This sequence belongs to the MscL family. In terms of assembly, homopentamer.

It is found in the cell membrane. Channel that opens in response to stretch forces in the membrane lipid bilayer. May participate in the regulation of osmotic pressure changes within the cell. The sequence is that of Large-conductance mechanosensitive channel from Levilactobacillus brevis (strain ATCC 367 / BCRC 12310 / CIP 105137 / JCM 1170 / LMG 11437 / NCIMB 947 / NCTC 947) (Lactobacillus brevis).